A 726-amino-acid chain; its full sequence is Catalase-peroxidase (726 aa).

A cross-link (tryptophyl-tyrosyl-methioninium (Trp-Tyr) (with M-239)) is located at residues Trp90 to Tyr213. The Proton acceptor role is filled by His91. A cross-link (tryptophyl-tyrosyl-methioninium (Tyr-Met) (with W-90)) is located at residues Tyr213 to Met239. Position 254 (His254) interacts with heme b. The segment at Thr338–Ala359 is disordered.

The protein belongs to the peroxidase family. Peroxidase/catalase subfamily. As to quaternary structure, homodimer or homotetramer. Heme b is required as a cofactor. In terms of processing, formation of the three residue Trp-Tyr-Met cross-link is important for the catalase, but not the peroxidase activity of the enzyme.

The enzyme catalyses H2O2 + AH2 = A + 2 H2O. It carries out the reaction 2 H2O2 = O2 + 2 H2O. Its function is as follows. Bifunctional enzyme with both catalase and broad-spectrum peroxidase activity. The sequence is that of Catalase-peroxidase from Bradyrhizobium sp. (strain ORS 278).